A 227-amino-acid polypeptide reads, in one-letter code: Phosphoribosylformylglycinamidine synthase subunit PurQ (227 aa).

In terms of domain architecture, Glutamine amidotransferase type-1 spans lysine 2–asparagine 226. Cysteine 86 serves as the catalytic Nucleophile. Catalysis depends on residues histidine 195 and glutamate 197.

As to quaternary structure, part of the FGAM synthase complex composed of 1 PurL, 1 PurQ and 2 PurS subunits.

It localises to the cytoplasm. The catalysed reaction is N(2)-formyl-N(1)-(5-phospho-beta-D-ribosyl)glycinamide + L-glutamine + ATP + H2O = 2-formamido-N(1)-(5-O-phospho-beta-D-ribosyl)acetamidine + L-glutamate + ADP + phosphate + H(+). It carries out the reaction L-glutamine + H2O = L-glutamate + NH4(+). The protein operates within purine metabolism; IMP biosynthesis via de novo pathway; 5-amino-1-(5-phospho-D-ribosyl)imidazole from N(2)-formyl-N(1)-(5-phospho-D-ribosyl)glycinamide: step 1/2. Functionally, part of the phosphoribosylformylglycinamidine synthase complex involved in the purines biosynthetic pathway. Catalyzes the ATP-dependent conversion of formylglycinamide ribonucleotide (FGAR) and glutamine to yield formylglycinamidine ribonucleotide (FGAM) and glutamate. The FGAM synthase complex is composed of three subunits. PurQ produces an ammonia molecule by converting glutamine to glutamate. PurL transfers the ammonia molecule to FGAR to form FGAM in an ATP-dependent manner. PurS interacts with PurQ and PurL and is thought to assist in the transfer of the ammonia molecule from PurQ to PurL. In Listeria welshimeri serovar 6b (strain ATCC 35897 / DSM 20650 / CCUG 15529 / CIP 8149 / NCTC 11857 / SLCC 5334 / V8), this protein is Phosphoribosylformylglycinamidine synthase subunit PurQ.